Here is a 449-residue protein sequence, read N- to C-terminus: Probable protoheme IX farnesyltransferase, mitochondrial (449 aa).

Low complexity predominate over residues 99-138 (TTSTTTTTNINENNIKNENNNENNNENSNNNNEQSIKSNQ). A disordered region spans residues 99-140 (TTSTTTTTNINENNIKNENNNENNNENSNNNNEQSIKSNQTK). A run of 7 helical transmembrane segments spans residues 163–183 (LTAI…WVVL), 245–267 (MAVT…LYCW), 279–299 (TWIG…AATG), 303–323 (AIGM…FLAL), 352–372 (SLAH…FFNF), 374–394 (VHPI…LPFI), and 402–422 (LYII…LLRQ).

The protein belongs to the UbiA prenyltransferase family.

It is found in the mitochondrion membrane. In terms of biological role, converts protoheme IX and farnesyl diphosphate to heme O. This is Probable protoheme IX farnesyltransferase, mitochondrial (cox10) from Dictyostelium discoideum (Social amoeba).